Here is a 328-residue protein sequence, read N- to C-terminus: Malate dehydrogenase (328 aa).

Position 11 to 17 (11 to 17 (GAAGQIG)) interacts with NAD(+). Substrate-binding residues include Arg-92 and Arg-98. NAD(+) contacts are provided by residues Asn-105, Gln-112, and 129–131 (VGN). Residues Asn-131 and Arg-162 each coordinate substrate. His-187 acts as the Proton acceptor in catalysis.

This sequence belongs to the LDH/MDH superfamily. MDH type 2 family.

It catalyses the reaction (S)-malate + NAD(+) = oxaloacetate + NADH + H(+). Catalyzes the reversible oxidation of malate to oxaloacetate. In Coxiella burnetii (strain RSA 493 / Nine Mile phase I), this protein is Malate dehydrogenase.